The chain runs to 555 residues: Splicing factor U2af large subunit A (555 aa).

A disordered region spans residues 1 to 165 (MRDYEGNGVD…ISGFDMAPPT (165 aa)). Composition is skewed to basic and acidic residues over residues 23–81 (ISRD…EKDR) and 90–127 (RDRSDRRERERTRDRDEDDLHRSRDYDRRRDNDKDRED). Residues 143–155 (SKSRSRSPSKSKR) are compositionally biased toward basic residues. RRM domains follow at residues 221 to 304 (RRVY…RPSD), 341 to 419 (DRIF…RANQ), and 460 to 546 (EVVT…YPEN).

This sequence belongs to the splicing factor SR family. As to expression, expressed in stems, leaves and apical buds.

The protein resides in the nucleus. In terms of biological role, necessary for the splicing of pre-mRNA. Binds to the U -enriched regions of plant introns. This is Splicing factor U2af large subunit A (U2AF65A) from Nicotiana plumbaginifolia (Leadwort-leaved tobacco).